The sequence spans 207 residues: Alpha-1-acid glycoprotein 1 (207 aa).

Residues 1-18 (MALHMILVMLSLLPLLEA) form the signal peptide. The residue at position 19 (Gln19) is a Pyrrolidone carboxylic acid. 5 N-linked (GlcNAc...) asparagine glycosylation sites follow: Asn25, Asn34, Asn76, Asn94, and Asn104. Cys91 and Cys184 are oxidised to a cystine.

It belongs to the calycin superfamily. Lipocalin family. As to expression, expressed by the liver and secreted in plasma.

It is found in the secreted. Functions as a transport protein in the blood stream. Binds various ligands in the interior of its beta-barrel domain. Appears to function in modulating the activity of the immune system during the acute-phase reaction. This is Alpha-1-acid glycoprotein 1 (Orm1) from Mus caroli (Ryukyu mouse).